Here is a 296-residue protein sequence, read N- to C-terminus: Decaprenyl diphosphate synthase (296 aa).

The disordered stretch occupies residues 1–24 (MARDARKRTSSNFPQLPPAPDDYP). D76 is an active-site residue. D76 serves as a coordination point for Mg(2+). Residues 76-80 (DGNGR), W81, R89, H93, 121-124 (STEN), W125, R127, R168, R244, and 250-252 (RSS) each bind substrate. Catalysis depends on N124, which acts as the Proton acceptor. E263 lines the Mg(2+) pocket. 292 to 294 (RFG) serves as a coordination point for substrate.

Belongs to the UPP synthase family. In terms of assembly, homodimer. Mg(2+) is required as a cofactor. Requires Mn(2+) as cofactor.

The protein localises to the cell membrane. It carries out the reaction (2Z,6E)-farnesyl diphosphate + 7 isopentenyl diphosphate = (2Z,6Z,10Z,14Z,18Z,22Z,26Z,30Z,34E)-decaprenyl diphosphate + 7 diphosphate. It catalyses the reaction n isopentenyl diphosphate + (2E,6E)-farnesyl diphosphate = a di-trans,poly-cis-polyprenyl diphosphate + n diphosphate. Its activity is regulated as follows. Activated by dithiothreitol and inhibited by EDTA. In terms of biological role, catalyzes the sequential condensation of isopentenyl diphosphate (IPP) in the cis configuration with (2Z,6E)-farnesyl diphosphate (Z-FPP or EZ-FPP) generating the 50 carbon product trans,polycis-decaprenyl diphosphate. When (2E,6E)-farnesyl diphosphate (E-FPP or EE-FPP) is used in vitro, both primary products decaprenyl diphosphate and (2E,6E,10E)-geranylgeranyl diphosphate (EEE-GGPP) are synthesized. M.tuberculosis does not synthesize (2E,6E,10Z)-geranylgeranyl diphosphate (EEZ-GGPP) and heptaprenyl diphosphate. Can also accept many different allylic substrates, including E-geranyl diphosphate (E-GPP), neryl diphosphate (NPP), and all-trans-geranyl-geranyl diphosphate. The polypeptide is Decaprenyl diphosphate synthase (uppS) (Mycobacterium tuberculosis (strain ATCC 25618 / H37Rv)).